A 382-amino-acid chain; its full sequence is UDP-4-amino-4-deoxy-L-arabinose--oxoglutarate aminotransferase (382 aa).

An N6-(pyridoxal phosphate)lysine modification is found at Lys183.

Belongs to the DegT/DnrJ/EryC1 family. ArnB subfamily. Homodimer. Pyridoxal 5'-phosphate is required as a cofactor.

It catalyses the reaction UDP-4-amino-4-deoxy-beta-L-arabinose + 2-oxoglutarate = UDP-beta-L-threo-pentopyranos-4-ulose + L-glutamate. Its pathway is nucleotide-sugar biosynthesis; UDP-4-deoxy-4-formamido-beta-L-arabinose biosynthesis; UDP-4-deoxy-4-formamido-beta-L-arabinose from UDP-alpha-D-glucuronate: step 2/3. It functions in the pathway bacterial outer membrane biogenesis; lipopolysaccharide biosynthesis. Catalyzes the conversion of UDP-4-keto-arabinose (UDP-Ara4O) to UDP-4-amino-4-deoxy-L-arabinose (UDP-L-Ara4N). The modified arabinose is attached to lipid A and is required for resistance to polymyxin and cationic antimicrobial peptides. This chain is UDP-4-amino-4-deoxy-L-arabinose--oxoglutarate aminotransferase, found in Pseudomonas aeruginosa (strain LESB58).